The sequence spans 526 residues: UDP-glycosyltransferase UGT5 (526 aa).

Residues 1–474 (MIFFYFLTLT…TAAVDMPWYQ (474 aa)) lie on the Lumenal side of the membrane. Asn-49, Asn-124, and Asn-283 each carry an N-linked (GlcNAc...) asparagine glycan. The chain crosses the membrane as a helical span at residues 475–495 (YLLLDVIAFLIFILVSVILII). Topologically, residues 496 to 526 (YYGVKISLRYLCALIFGNSSSLKPTKKVKDN) are cytoplasmic.

This sequence belongs to the UDP-glycosyltransferase family.

The protein resides in the microsome membrane. In terms of biological role, catalyzes the transfer of a glycosyl group from a UDP-sugar to an acceptor molecule. This chain is UDP-glycosyltransferase UGT5, found in Dactylopius coccus (Cochineal).